The following is a 293-amino-acid chain: Shikimate kinase (293 aa).

Residue 87-97 (PLAGGLKSSSA) participates in ATP binding.

This sequence belongs to the GHMP kinase family. Archaeal shikimate kinase subfamily.

It is found in the cytoplasm. It catalyses the reaction shikimate + ATP = 3-phosphoshikimate + ADP + H(+). It functions in the pathway metabolic intermediate biosynthesis; chorismate biosynthesis; chorismate from D-erythrose 4-phosphate and phosphoenolpyruvate: step 5/7. This Methanosarcina mazei (strain ATCC BAA-159 / DSM 3647 / Goe1 / Go1 / JCM 11833 / OCM 88) (Methanosarcina frisia) protein is Shikimate kinase.